The primary structure comprises 361 residues: Zinc transporter ZIP13 (361 aa).

Residues Met1–Cys6 lie on the Lumenal side of the membrane. A helical transmembrane segment spans residues Pro7–Leu27. The Cytoplasmic portion of the chain corresponds to Glu28–Trp68. Residues Ile69–Ile89 form a helical membrane-spanning segment. Residues Pro90–Gln108 lie on the Lumenal side of the membrane. Residues Leu109–Ala129 form a helical membrane-spanning segment. Over Trp130–Gln150 the chain is Cytoplasmic. The helical transmembrane segment at Leu151–Asn171 threads the bilayer. Over Ser172–Ala232 the chain is Lumenal. A helical membrane pass occupies residues Val233–Leu253. An XEXPHE-motif motif is present at residues His254 to Glu259. At His254 to Thr275 the chain is on the cytoplasmic side. Residues Ala276–Cys296 form a helical membrane-spanning segment. At Thr297–Thr306 the chain is on the lumenal side. Residues Val307 to Leu327 form a helical membrane-spanning segment. Residues Pro328–Ser339 are Cytoplasmic-facing. Residues Leu340 to Val360 traverse the membrane as a helical segment. Position 361 (Glu361) is a topological domain, lumenal.

Belongs to the ZIP transporter (TC 2.A.5) family. As to quaternary structure, homodimer. As to expression, highly expressed in some tissues such as bone and eye. Expressed in osteoblasts of tibia and of alveolar bone, in proliferative zone of growth plate, and in odontoblasts on the forming of the dentine of crown in molar tooth. Also expressed fibroblasts in reticular layer of dermis of skin.

The protein resides in the golgi apparatus membrane. It is found in the cytoplasmic vesicle membrane. Its subcellular location is the endoplasmic reticulum membrane. The catalysed reaction is Zn(2+)(in) = Zn(2+)(out). Functionally, functions as a zinc transporter transporting Zn(2+) from the Golgi apparatus to the cytosol and thus influences the zinc level at least in areas of the cytosol. May regulate beige adipocyte differentiation. This Mus musculus (Mouse) protein is Zinc transporter ZIP13.